We begin with the raw amino-acid sequence, 465 residues long: Cysteine--tRNA ligase (465 aa).

Cysteine 30 contacts Zn(2+). The 'HIGH' region motif lies at isoleucine 32 to histidine 42. 3 residues coordinate Zn(2+): cysteine 214, histidine 239, and glutamate 243. The 'KMSKS' region signature appears at lysine 271–serine 275. ATP is bound at residue lysine 274.

This sequence belongs to the class-I aminoacyl-tRNA synthetase family. As to quaternary structure, monomer. It depends on Zn(2+) as a cofactor.

It localises to the cytoplasm. The catalysed reaction is tRNA(Cys) + L-cysteine + ATP = L-cysteinyl-tRNA(Cys) + AMP + diphosphate. The sequence is that of Cysteine--tRNA ligase from Burkholderia cenocepacia (strain ATCC BAA-245 / DSM 16553 / LMG 16656 / NCTC 13227 / J2315 / CF5610) (Burkholderia cepacia (strain J2315)).